Here is a 417-residue protein sequence, read N- to C-terminus: NADH-quinone oxidoreductase subunit D (417 aa).

Belongs to the complex I 49 kDa subunit family. As to quaternary structure, NDH-1 is composed of 14 different subunits. Subunits NuoB, C, D, E, F, and G constitute the peripheral sector of the complex.

The protein localises to the cell inner membrane. The catalysed reaction is a quinone + NADH + 5 H(+)(in) = a quinol + NAD(+) + 4 H(+)(out). NDH-1 shuttles electrons from NADH, via FMN and iron-sulfur (Fe-S) centers, to quinones in the respiratory chain. The immediate electron acceptor for the enzyme in this species is believed to be ubiquinone. Couples the redox reaction to proton translocation (for every two electrons transferred, four hydrogen ions are translocated across the cytoplasmic membrane), and thus conserves the redox energy in a proton gradient. This is NADH-quinone oxidoreductase subunit D from Paracidovorax citrulli (strain AAC00-1) (Acidovorax citrulli).